The chain runs to 221 residues: Stromal cell-derived factor 2-like protein 1 (221 aa).

The N-terminal stretch at 1–28 is a signal peptide; sequence MWSAGSGRAAGPALLGILLALSLSGGRA. MIR domains are found at residues 33–87, 95–150, and 151–205; these read AGLV…IRGG, GSPV…VRCS, and GQHW…AMEG. The Prevents secretion from ER motif lies at 218–221; the sequence is HDEL.

Its subcellular location is the endoplasmic reticulum lumen. This chain is Stromal cell-derived factor 2-like protein 1 (SDF2L1), found in Bos taurus (Bovine).